Reading from the N-terminus, the 224-residue chain is ATP-dependent dethiobiotin synthetase BioD (224 aa).

E12–V17 is an ATP binding site. Position 16 (T16) interacts with Mg(2+). The active site involves K34. Position 38 (T38) interacts with substrate. ATP is bound by residues D47, E106 to G109, G166 to S167, and P196 to G198. Mg(2+)-binding residues include D47 and E106.

The protein belongs to the dethiobiotin synthetase family. In terms of assembly, homodimer. Mg(2+) is required as a cofactor.

It localises to the cytoplasm. It catalyses the reaction (7R,8S)-7,8-diammoniononanoate + CO2 + ATP = (4R,5S)-dethiobiotin + ADP + phosphate + 3 H(+). The protein operates within cofactor biosynthesis; biotin biosynthesis; biotin from 7,8-diaminononanoate: step 1/2. In terms of biological role, catalyzes a mechanistically unusual reaction, the ATP-dependent insertion of CO2 between the N7 and N8 nitrogen atoms of 7,8-diaminopelargonic acid (DAPA, also called 7,8-diammoniononanoate) to form a ureido ring. The polypeptide is ATP-dependent dethiobiotin synthetase BioD (Saccharopolyspora erythraea (strain ATCC 11635 / DSM 40517 / JCM 4748 / NBRC 13426 / NCIMB 8594 / NRRL 2338)).